The following is an 87-amino-acid chain: Large ribosomal subunit protein bL27c (87 aa).

The segment at 1–20 is disordered; the sequence is MAHKKGSGSTKNGRDSRSQR.

The protein belongs to the bacterial ribosomal protein bL27 family.

The protein localises to the plastid. Its subcellular location is the chloroplast. This is Large ribosomal subunit protein bL27c from Gracilaria tenuistipitata var. liui (Red alga).